Consider the following 292-residue polypeptide: Insulin-like growth factor-binding protein 3 (292 aa).

The signal sequence occupies residues 1–27 (MHPARPALWAAALTALTLLRGPPVARA). An IGFBP N-terminal domain is found at 36-119 (PVVRCEPCDA…LNGRGFCANA (84 aa)). 6 cysteine pairs are disulfide-bonded: Cys-40–Cys-69, Cys-43–Cys-71, Cys-51–Cys-72, Cys-60–Cys-75, Cys-83–Cys-96, and Cys-90–Cys-116. Asn-118 and Asn-137 each carry an N-linked (GlcNAc...) asparagine glycan. Disordered stretches follow at residues 128 to 152 (YLPSQPAPGNISESEEEHNAGSVES) and 178 to 212 (KGHARDSQRYKVDYESQSTDTQNFSSESKRETEYG). At Ser-149 the chain carries Phosphoserine. Over residues 178–191 (KGHARDSQRYKVDY) the composition is skewed to basic and acidic residues. Positions 192–203 (ESQSTDTQNFSS) are enriched in polar residues. Asn-200 carries N-linked (GlcNAc...) asparagine glycosylation. A Phosphoserine modification is found at Ser-202. The region spanning 211–286 (YGPCRREMED…DTKGKDDVHC (76 aa)) is the Thyroglobulin type-1 domain. Cystine bridges form between Cys-214/Cys-241, Cys-252/Cys-263, and Cys-265/Cys-286.

As to quaternary structure, interacts with XLKD1. Binds IGF2 more than IGF1. Forms a ternary complex of about 140 to 150 kDa with IGF1 or IGF2 and a 85 kDa glycoprotein (ALS). Interacts with TMEM219. In terms of processing, phosphorylated by FAM20C in the extracellular medium.

The protein localises to the secreted. IGF-binding proteins prolong the half-life of the IGFs and have been shown to either inhibit or stimulate the growth promoting effects of the IGFs on cell culture. They alter the interaction of IGFs with their cell surface receptors. Also exhibits IGF-independent antiproliferative and apoptotic effects mediated by its receptor TMEM219/IGFBP-3R. Promotes testicular germ cell apoptosis. In Mus musculus (Mouse), this protein is Insulin-like growth factor-binding protein 3 (Igfbp3).